The primary structure comprises 534 residues: Probable inorganic phosphate transporter 1-8 (534 aa).

Residues 1-21 are Cytoplasmic-facing; sequence MPIKVLSSLDVARTQWYHFKA. Residues 22–42 traverse the membrane as a helical segment; the sequence is IIVAGMGLFTDAYDLFCIAPV. The Extracellular segment spans residues 43–61; sequence MKMISHVYYNGDSINTAVL. Residues 62-82 traverse the membrane as a helical segment; sequence STSYAIALLGTATGQLVFGYL. Residues 83–90 lie on the Cytoplasmic side of the membrane; sequence GDRVGRRR. The helical transmembrane segment at 91–111 threads the bilayer; the sequence is VYGLCLIIMILSSFGCGFSVC. Residues 112 to 123 lie on the Extracellular side of the membrane; it reads TTRRSCVMVSLG. Residues 124–144 form a helical membrane-spanning segment; it reads FFRFFLGLGIGGDYPLSATIM. Topologically, residues 145–153 are cytoplasmic; that stretch reads SEFANKRTR. Residues 154 to 174 form a helical membrane-spanning segment; that stretch reads GAFIAAVFSMQGLGILVSSAV. Residues 175–199 lie on the Extracellular side of the membrane; that stretch reads TMAVCVAFKRSGGGLEVDAAAPTEA. The helical transmembrane segment at 200-220 threads the bilayer; that stretch reads DLAWRLILMIGALPAALTFYW. At 221–281 the chain is on the cytoplasmic side; it reads RMLMPETARY…KLFSRCFFRL (61 aa). Residues 282 to 302 traverse the membrane as a helical segment; the sequence is HGRDLFAASFNWFLVDIVFYT. The Extracellular segment spans residues 303–333; that stretch reads SNLLLSHIFSHYSKKPSTAENVYDAAFEVAE. Residues 334-354 form a helical membrane-spanning segment; sequence LGAIIAACSTIPGYWFTVYFI. Topologically, residues 355–361 are cytoplasmic; it reads DKIGRVK. A helical membrane pass occupies residues 362 to 382; the sequence is IQIMGFFFMAVIYLVAGIPYS. Residues 383-396 lie on the Extracellular side of the membrane; sequence WYWSKHEHNNKGFM. The helical transmembrane segment at 397–417 threads the bilayer; that stretch reads VLYGLVFFFCNFGPNTTTFII. The Cytoplasmic segment spans residues 418 to 431; it reads PAEHFPARFRSTCH. The chain crosses the membrane as a helical span at residues 432–452; it reads GISGAAGKLGAIVGTVGFLWA. Residues 453-472 lie on the Extracellular side of the membrane; sequence TKKMESDDKNQIYPEVNRMR. A helical transmembrane segment spans residues 473–493; it reads IAFLILGGVCIAGILVTYFFT. Residues 494–534 are Cytoplasmic-facing; that stretch reads KETMGRSLEENEHDQDNNAESEDEPQIVDGQSSVSTLLQTR. The segment at 501–534 is disordered; it reads LEENEHDQDNNAESEDEPQIVDGQSSVSTLLQTR. The span at 510–519 shows a compositional bias: acidic residues; the sequence is NNAESEDEPQ. The residue at position 514 (S514) is a Phosphoserine. A compositionally biased stretch (polar residues) spans 522-534; sequence DGQSSVSTLLQTR.

Belongs to the major facilitator superfamily. Phosphate:H(+) symporter (TC 2.A.1.9) family. As to expression, in roots.

It is found in the membrane. Functionally, high-affinity transporter for external inorganic phosphate. This Arabidopsis thaliana (Mouse-ear cress) protein is Probable inorganic phosphate transporter 1-8 (PHT1-8).